The following is a 246-amino-acid chain: Sulfate transporter CysZ (246 aa).

Transmembrane regions (helical) follow at residues 24–44 (LFVLIPLTLNLLVFALLIGFA), 69–89 (IVWPLFVLLVLVIVFFTFTMV), 148–168 (LLVLSFVPGVNLIATPLWILF), and 214–234 (LLIPLVNLVMMPAAVAGATLF).

This sequence belongs to the CysZ family.

It localises to the cell inner membrane. High affinity, high specificity proton-dependent sulfate transporter, which mediates sulfate uptake. Provides the sulfur source for the cysteine synthesis pathway. This chain is Sulfate transporter CysZ, found in Pseudomonas aeruginosa (strain LESB58).